The primary structure comprises 553 residues: Putative transport protein YidE (553 aa).

5 helical membrane-spanning segments follow: residues 4-24 (IALTVSILALVAVVGLFIGNV), 28-48 (GIGLGIGGVLFGGIIVGHFVS), 65-85 (FGLILFVYTIGIQVGPGFFAS), 95-115 (LFAVLIVIIGGLVTAILHKLF), and 158-178 (MSYAMAYPFGICGILFTMWML). RCK C-terminal domains are found at residues 191-276 (QQHE…VIGQ) and 279-361 (DTSL…VLGN). 5 helical membrane-spanning segments follow: residues 371 to 391 (MLPVFIGIGLGVLLGSIPVFV), 394 to 414 (FPAALKLGLAGGPLIMALILG), 439 to 459 (IVLFLSVVGLKSGGDFVNTLV), 464 to 484 (LSWIGYGALITAVPLITVGIL), and 533 to 553 (LVMFLRIITPQLLAVLFWSIG).

It belongs to the AAE transporter (TC 2.A.81) family. YidE subfamily.

It is found in the cell membrane. The protein is Putative transport protein YidE of Shigella dysenteriae serotype 1 (strain Sd197).